The chain runs to 430 residues: Glutamine synthetase, chloroplastic/mitochondrial (430 aa).

The transit peptide at methionine 1–arginine 45 directs the protein to the chloroplast and mitochondrion. In terms of domain architecture, GS beta-grasp spans isoleucine 77 to glycine 157. A disordered region spans residues threonine 97 to proline 122. Serine 106 is modified (phosphoserine). The 270-residue stretch at proline 161 to valine 430 folds into the GS catalytic domain.

It belongs to the glutamine synthetase family. In terms of assembly, homooctamer. Expressed in mesophyll and epidermal cells of leaves.

The protein resides in the plastid. It localises to the chloroplast. It is found in the mitochondrion. The catalysed reaction is L-glutamate + NH4(+) + ATP = L-glutamine + ADP + phosphate + H(+). Functionally, the light-modulated chloroplast/mitochondrial enzyme, encoded by a nuclear gene and expressed primarily in leaves, is responsible for the reassimilation of the ammonia generated by photorespiration. In Arabidopsis thaliana (Mouse-ear cress), this protein is Glutamine synthetase, chloroplastic/mitochondrial (GLN2).